A 547-amino-acid chain; its full sequence is Chaperonin GroEL (547 aa).

ATP is bound by residues Thr-30–Pro-33, Lys-51, Asp-87–Thr-91, Gly-415, Asn-479–Ala-481, and Asp-495.

Belongs to the chaperonin (HSP60) family. In terms of assembly, forms a cylinder of 14 subunits composed of two heptameric rings stacked back-to-back. Interacts with the co-chaperonin GroES.

It localises to the cytoplasm. The enzyme catalyses ATP + H2O + a folded polypeptide = ADP + phosphate + an unfolded polypeptide.. Functionally, together with its co-chaperonin GroES, plays an essential role in assisting protein folding. The GroEL-GroES system forms a nano-cage that allows encapsulation of the non-native substrate proteins and provides a physical environment optimized to promote and accelerate protein folding. This chain is Chaperonin GroEL, found in Pseudomonas syringae pv. tomato (strain ATCC BAA-871 / DC3000).